The sequence spans 1068 residues: MPPRPSSGELWGIHLMPPRILVECLLPNGMIVTLECLREATLITIKHELFKEARKYPLHQLLQDESSYIFVSVTQEAEREEFFDETRRLCDLRLFQPFLKVIEPVGNREEKILNREIGFAIGMPVCEFDMVKDPEVQDFRRNILNVCKEAVDLRDLNSPHSRAMYVYPPNVESSPELPKHIYNKLDKGQIIVVIWVIVSPNNDKQKYTLKINHDCVPEQVIAEAIRKKTRSMLLSSEQLKLCVLEYQGKYILKVCGCDEYFLEKYPLSQYKYIRSCIMLGRMPNLMLMAKESLYSQLPMDCFTMPSYSRRISTATPYMNGETSTKSLWVINSALRIKILCATYVNVNIRDIDKIYVRTGIYHGGEPLCDNVNTQRVPCSNPRWNEWLNYDIYIPDLPRAARLCLSICSVKGRKGAKEEHCPLAWGNINLFDYTDTLVSGKMALNLWPVPHGLEDLLNPIGVTGSNPNKETPCLELEFDWFSSVVKFPDMSVIEEHANWSVSREAGFSYSHAGLSNRLARDNELRENDKEQLRAICTRDPLSEITEQEKDFLWSHRHYCVTIPEILPKLLLSVKWNSRDEVAQMYCLVKDWPPIKPEQAMELLDCNYPDPMVRGFAVRCLEKYLTDDKLSQYLIQLVQVLKYEQYLDNLLVRFLLKKALTNQRIGHFFFWHLKSEMHNKTVSQRFGLLLESYCRACGMYLKHLNRQVEAMEKLINLTDILKQEKKDETQKVQMKFLVEQMRRPDFMDALQGFLSPLNPAHQLGNLRLEECRIMSSAKRPLWLNWENPDIMSELLFQNNEIIFKNGDDLRQDMLTLQIIRIMENIWQNQGLDLRMLPYGCLSIGDCVGLIEVVRNSHTIMQIQCKGGLKGALQFNSHTLHQWLKDKNKGEIYDAAIDLFTRSCAGYCVATFILGIGDRHNSNIMVKDDGQLFHIDFGHFLDHKKKKFGYKRERVPFVLTQDFLIVISKGAQECTKTREFERFQEMCYKAYLAIRQHANLFINLFSMMLGSGMPELQSFDDIAYIRKTLALDKTEQEALEYFMKQMNDAHHGGWTTKMDWIFHTIKQHALN.

Positions methionine 16–valine 105 constitute a PI3K-ABD domain. The 103-residue stretch at lysine 187–alanine 289 folds into the PI3K-RBD domain. Residues isoleucine 330–proline 487 form the C2 PI3K-type domain. A PIK helical domain is found at leucine 517 to alanine 694. A PI3K/PI4K catalytic domain is found at arginine 765 to tryptophan 1051. The G-loop stretch occupies residues isoleucine 771–arginine 777. A catalytic loop region spans residues glycine 912–asparagine 920. The segment at histidine 931–threonine 957 is activation loop.

This sequence belongs to the PI3/PI4-kinase family. As to quaternary structure, heterodimer of a catalytic subunit PIK3CA and a p85 regulatory subunit (PIK3R1, PIK3R2 or PIK3R3). Interacts with IRS1 in nuclear extracts. Interacts with RUFY3. Interacts with RASD2. Interacts with APPL1. Interacts with HRAS and KRAS. Interaction with HRAS/KRAS is required for PI3K pathway signaling and cell proliferation stimulated by EGF and FGF2. Interacts with FAM83B; activates the PI3K/AKT signaling cascade.

It catalyses the reaction L-seryl-[protein] + ATP = O-phospho-L-seryl-[protein] + ADP + H(+). It carries out the reaction a 1,2-diacyl-sn-glycero-3-phospho-(1D-myo-inositol) + ATP = a 1,2-diacyl-sn-glycero-3-phospho-(1D-myo-inositol-3-phosphate) + ADP + H(+). The enzyme catalyses a 1,2-diacyl-sn-glycero-3-phospho-(1D-myo-inositol-4,5-bisphosphate) + ATP = a 1,2-diacyl-sn-glycero-3-phospho-(1D-myo-inositol-3,4,5-trisphosphate) + ADP + H(+). The catalysed reaction is 1,2-dioctanoyl-sn-glycero-3-phospho-(1D-myo-inositol-4,5-bisphosphate) + ATP = 1,2-dioctanoyl-sn-glycero-3-phospho-(1D-myo-inositol-3,4,5-trisphosphate) + ADP + H(+). It catalyses the reaction 1-octadecanoyl-2-(5Z,8Z,11Z,14Z)-eicosatetraenoyl-sn-glycero-3-phospho-1D-myo-inositol 4,5-bisphosphate + ATP = 1-octadecanoyl-2-(5Z,8Z,11Z,14Z-eicosatetraenoyl)-sn-glycero-3-phospho-(1D-myo-inositol 3,4,5-triphosphate) + ADP + H(+). It functions in the pathway phospholipid metabolism; phosphatidylinositol phosphate biosynthesis. In terms of biological role, phosphoinositide-3-kinase (PI3K) phosphorylates phosphatidylinositol (PI) and its phosphorylated derivatives at position 3 of the inositol ring to produce 3-phosphoinositides. Uses ATP and PtdIns(4,5)P2 (phosphatidylinositol 4,5-bisphosphate) to generate phosphatidylinositol 3,4,5-trisphosphate (PIP3). PIP3 plays a key role by recruiting PH domain-containing proteins to the membrane, including AKT1 and PDPK1, activating signaling cascades involved in cell growth, survival, proliferation, motility and morphology. Participates in cellular signaling in response to various growth factors. Involved in the activation of AKT1 upon stimulation by receptor tyrosine kinases ligands such as EGF, insulin, IGF1, VEGFA and PDGF. Involved in signaling via insulin-receptor substrate (IRS) proteins. Essential in endothelial cell migration during vascular development through VEGFA signaling, possibly by regulating RhoA activity. Required for lymphatic vasculature development, possibly by binding to RAS and by activation by EGF and FGF2, but not by PDGF. Regulates invadopodia formation through the PDPK1-AKT1 pathway. Participates in cardiomyogenesis in embryonic stem cells through a AKT1 pathway. Participates in vasculogenesis in embryonic stem cells through PDK1 and protein kinase C pathway. In addition to its lipid kinase activity, it displays a serine-protein kinase activity that results in the autophosphorylation of the p85alpha regulatory subunit as well as phosphorylation of other proteins such as 4EBP1, H-Ras, the IL-3 beta c receptor and possibly others. Plays a role in the positive regulation of phagocytosis and pinocytosis. The polypeptide is Phosphatidylinositol 4,5-bisphosphate 3-kinase catalytic subunit alpha isoform (PIK3CA) (Bos taurus (Bovine)).